We begin with the raw amino-acid sequence, 432 residues long: MAKPAYKVADISLAEFGRKEIVLAENEMPGLMACRQKYGPLKILKGARIAGCLHMTIQTAVLIETLIELGAEVQWSSCNIFSTQDHAAAAMAKAGVPVYAWKGETDEEYMWCIRQTLIFPDGKPLNMILDDGGDLTNLVHAEHPELLKEIRGLSEETTTGVHNLYKMFREGRLGMPAINVNDSVTKSKFDNLYGCRESLLDGIKRATDVMIAGKVCVVAGYGDVGKGCAQALRGSGGRVLITEIDPINALQAAMEGYEVTTMEEASKEAQIFVTTTGCTDIIMGEHFLNMKDDSIVCNIGHFDCEINVTWLQENAVEKVNIKPQVDRYRLANGNHIILLAEGRLVNLGCAMGHSSFVMSNSFTNQVLAQIELWTNREQYAIGVHVLPKKLDEEVAALHLDKLGVKLTKLSARQAEYLNLPAEGPYKPEHYRY.

Residues Thr56, Asp131, and Glu156 each contribute to the substrate site. 157–159 contacts NAD(+); it reads TTT. Positions 186 and 190 each coordinate substrate. Residues Asn191, 222 to 227, Glu243, 299 to 301, and Asn346 each bind NAD(+); these read GDVGKG and IGH.

This sequence belongs to the adenosylhomocysteinase family. It depends on NAD(+) as a cofactor.

It catalyses the reaction S-adenosyl-L-homocysteine + H2O = L-homocysteine + adenosine. It participates in amino-acid biosynthesis; L-homocysteine biosynthesis; L-homocysteine from S-adenosyl-L-homocysteine: step 1/1. Its function is as follows. Adenosylhomocysteine is a competitive inhibitor of S-adenosyl-L-methionine-dependent methyl transferase reactions; therefore adenosylhomocysteinase may play a key role in the control of methylations via regulation of the intracellular concentration of adenosylhomocysteine. This Anopheles gambiae (African malaria mosquito) protein is Adenosylhomocysteinase (Ahcy13).